The primary structure comprises 309 residues: MILTVTMNPSIDISYPLDELKIDTVNRVVDVTKTAGGKGLNVTRVLSEFGDSVLATGLVGGKLGEFLVEHIDNQVKKDFFSIQGETRNCIAILHGDNQTEVLEKGPEVLEQEGQDFLEHFKKLLESVEVVAISGSLPAGLPVDYYASLVELANQAGKPVVLDCSGAALQAVLESPHKPTVIKPNNEELSQLLGREVSEDLDELKEVLQEPLFAGIEWIIVSLGANGTFAKHGDTFYKVDIPRIQVVNPVGSGDSTVAGISSGLLHKESDAELLIKANVLGMLNTQEKMTGHVNMANYQALYDQLIVKEV.

This sequence belongs to the carbohydrate kinase PfkB family. LacC subfamily.

It carries out the reaction D-tagatofuranose 6-phosphate + ATP = D-tagatofuranose 1,6-bisphosphate + ADP + H(+). The protein operates within carbohydrate metabolism; D-tagatose 6-phosphate degradation; D-glyceraldehyde 3-phosphate and glycerone phosphate from D-tagatose 6-phosphate: step 1/2. This chain is Tagatose-6-phosphate kinase, found in Streptococcus pneumoniae (strain ATCC 700669 / Spain 23F-1).